The sequence spans 61 residues: Large ribosomal subunit protein uL30 (61 aa).

It belongs to the universal ribosomal protein uL30 family. As to quaternary structure, part of the 50S ribosomal subunit.

The chain is Large ribosomal subunit protein uL30 from Colwellia psychrerythraea (strain 34H / ATCC BAA-681) (Vibrio psychroerythus).